The chain runs to 1069 residues: Regulator of nonsense transcripts 1 (1069 aa).

Residues 1 to 86 (MDDSDDEYSR…SEKSLTEEQH (86 aa)) are disordered. Residues 28 to 50 (IGNTQDSQFAYEQFSVPTQSSQA) show a composition bias toward polar residues. A compositionally biased stretch (low complexity) spans 51–65 (TDLLPGGTDGTTNDL). A compositionally biased stretch (basic and acidic residues) spans 77–86 (SEKSLTEEQH). One can recognise a Upf1 CH-rich domain in the interval 87 to 244 (EQKLPEHACR…VRMEELWRDH (158 aa)). Cysteine 95, cysteine 98, cysteine 109, cysteine 112, cysteine 117, histidine 127, histidine 131, histidine 137, cysteine 155, cysteine 158, cysteine 181, and cysteine 185 together coordinate Zn(2+). The interval 95 to 127 (CRYCGISDPLCVAKCTVCRKWFCNSNDGTSGGH) is C3H. Residues 109–137 (CTVCRKWFCNSNDGTSGGHIVHHMVRSQH) are CC/SHH/C. The segment at 155–185 (CYRCGSKNVFNLGFIPGKKDQVVVIICRTPC) is C4. ATP is bound by residues glutamine 450, 467-474 (GPPGTGKT), glutamine 639, tyrosine 676, and glutamate 807. Residues 966–1069 (ARNQKDRRRG…MDDLLFSQDC (104 aa)) form a disordered region. Residues 991 to 1013 (SQGMMSQQSQQYPPQGASSQSQY) are compositionally biased toward low complexity.

Belongs to the DNA2/NAM7 helicase family. In terms of processing, phosphorylated probably by smg-1. Smg-3 and smg-4 are required for phosphorylation.

It is found in the cytoplasm. It catalyses the reaction ATP + H2O = ADP + phosphate + H(+). Functionally, RNA-dependent helicase required for nonsense-mediated decay (NMD) of aberrant mRNAs containing premature stop codons and modulates the expression level of normal mRNAs. Is recruited to mRNAs upon translation termination and undergoes a cycle of phosphorylation and dephosphorylation; its phosphorylation appears to be a key step in NMD. The formation of an smg-2-3-4 surveillance complex is believed to activate NMD. This Caenorhabditis elegans protein is Regulator of nonsense transcripts 1 (smg-2).